We begin with the raw amino-acid sequence, 234 residues long: Glucosamine-6-phosphate deaminase (234 aa).

The active-site Proton acceptor; for enolization step is the Asp62. Asn128 acts as the For ring-opening step in catalysis. Residue His130 is the Proton acceptor; for ring-opening step of the active site. The For ring-opening step role is filled by Glu135.

It belongs to the glucosamine/galactosamine-6-phosphate isomerase family. NagB subfamily.

It catalyses the reaction alpha-D-glucosamine 6-phosphate + H2O = beta-D-fructose 6-phosphate + NH4(+). Its pathway is amino-sugar metabolism; N-acetylneuraminate degradation; D-fructose 6-phosphate from N-acetylneuraminate: step 5/5. Catalyzes the reversible isomerization-deamination of glucosamine 6-phosphate (GlcN6P) to form fructose 6-phosphate (Fru6P) and ammonium ion. This Streptococcus pyogenes serotype M3 (strain ATCC BAA-595 / MGAS315) protein is Glucosamine-6-phosphate deaminase.